The following is a 382-amino-acid chain: Elloramycin glycosyltransferase ElmGT (382 aa).

This sequence belongs to the glycosyltransferase 28 family.

The catalysed reaction is 8-demethyltetracenomycin C + dTDP-beta-L-rhamnose = 8-demethyl-8-alpha-L-rhamnosyl-tetracenomycin C + dTDP + H(+). The protein operates within antibiotic biosynthesis. Its function is as follows. Glycosyltransferase that transfers an L-rhamnose moiety from dTDP-L-rhamnose to the elloramycin aglycone 8-demethyl-tetracenomycin C (8DMTC) in elloramycin biosynthesis, an antitumor polyketide. Possesses donor substrate flexibility: able to transfer at least 11 different sugars to 8DMTC, such as NDP-D-glucose, as well as NDP-L-digitoxose, including both L- and D-isomeric forms of some sugars. In Streptomyces olivaceus, this protein is Elloramycin glycosyltransferase ElmGT.